A 238-amino-acid chain; its full sequence is Small ribosomal subunit protein uS2c (238 aa).

It belongs to the universal ribosomal protein uS2 family.

The protein localises to the plastid. It localises to the chloroplast. The chain is Small ribosomal subunit protein uS2c (rps2) from Oltmannsiellopsis viridis (Marine flagellate).